A 372-amino-acid chain; its full sequence is DNA replication and repair protein RecF (372 aa).

30 to 37 serves as a coordination point for ATP; that stretch reads GENAQGKT.

It belongs to the RecF family.

It is found in the cytoplasm. Functionally, the RecF protein is involved in DNA metabolism; it is required for DNA replication and normal SOS inducibility. RecF binds preferentially to single-stranded, linear DNA. It also seems to bind ATP. The sequence is that of DNA replication and repair protein RecF from Exiguobacterium sp. (strain ATCC BAA-1283 / AT1b).